The sequence spans 89 residues: Large ribosomal subunit protein uL29c (89 aa).

This sequence belongs to the universal ribosomal protein uL29 family.

The protein localises to the plastid. The protein resides in the chloroplast. This Trieres chinensis (Marine centric diatom) protein is Large ribosomal subunit protein uL29c (rpl29).